The following is a 690-amino-acid chain: Eukaryotic translation initiation factor 3 subunit B (690 aa).

Residues 1-11 (MAKKKSEEHSG) are compositionally biased toward basic and acidic residues. Residues 1 to 33 (MAKKKSEEHSGADANDSDYNEEPNFDDPPGYVD) are disordered. Acidic residues predominate over residues 15–25 (NDSDYNEEPNF). Positions 57-141 (SVVVVDNMPK…YTFAVNLFTD (85 aa)) constitute an RRM domain. WD repeat units lie at residues 207 to 246 (TRERFTDTFVKWSPLGTYVVTFHKPGVAIWGGSSFQKIQK), 292 to 331 (GDGMSVLSMFRWSHDDKFVARMGENSIHIYETPSFYLLDL), 334 to 369 (IKIAGIRGFSWSPTDNVIAYWVEEQNQIPARVTLME), 442 to 484 (EIRE…KPSL), and 530 to 575 (PDHF…IRRT). The stretch at 613–646 (EQKDRLRLTRASKELLEKRAQLRETFMEYRNKRI) forms a coiled coil.

It belongs to the eIF-3 subunit B family. Component of the eukaryotic translation initiation factor 3 (eIF-3) complex. The eIF-3 complex interacts with pix. Interacts with mxt.

The protein resides in the cytoplasm. In terms of biological role, RNA-binding component of the eukaryotic translation initiation factor 3 (eIF-3) complex, which is involved in protein synthesis of a specialized repertoire of mRNAs and, together with other initiation factors, stimulates binding of mRNA and methionyl-tRNAi to the 40S ribosome. The eIF-3 complex specifically targets and initiates translation of a subset of mRNAs involved in cell proliferation. The chain is Eukaryotic translation initiation factor 3 subunit B from Drosophila mojavensis (Fruit fly).